A 439-amino-acid chain; its full sequence is Ribosomal protein uS12 methylthiotransferase RimO (439 aa).

Positions 3–115 (NKLHIVSLGC…IDELLVEKKS (113 aa)) constitute an MTTase N-terminal domain. The [4Fe-4S] cluster site is built by C12, C46, C78, C146, C150, and C153. The region spanning 132-361 (TGSTYHAYIK…GKIAADVMQA (230 aa)) is the Radical SAM core domain.

Belongs to the methylthiotransferase family. RimO subfamily. [4Fe-4S] cluster is required as a cofactor.

Its subcellular location is the cytoplasm. The catalysed reaction is L-aspartate(89)-[ribosomal protein uS12]-hydrogen + (sulfur carrier)-SH + AH2 + 2 S-adenosyl-L-methionine = 3-methylsulfanyl-L-aspartate(89)-[ribosomal protein uS12]-hydrogen + (sulfur carrier)-H + 5'-deoxyadenosine + L-methionine + A + S-adenosyl-L-homocysteine + 2 H(+). Catalyzes the methylthiolation of an aspartic acid residue of ribosomal protein uS12. This is Ribosomal protein uS12 methylthiotransferase RimO from Sulfurimonas denitrificans (strain ATCC 33889 / DSM 1251) (Thiomicrospira denitrificans (strain ATCC 33889 / DSM 1251)).